A 432-amino-acid polypeptide reads, in one-letter code: Anaerobic glycerol-3-phosphate dehydrogenase subunit B (432 aa).

The protein belongs to the anaerobic G-3-P dehydrogenase subunit B family. In terms of assembly, composed of a catalytic GlpA/B dimer and of membrane bound GlpC. FMN is required as a cofactor.

It catalyses the reaction a quinone + sn-glycerol 3-phosphate = dihydroxyacetone phosphate + a quinol. Its pathway is polyol metabolism; glycerol degradation via glycerol kinase pathway; glycerone phosphate from sn-glycerol 3-phosphate (anaerobic route): step 1/1. Its function is as follows. Conversion of glycerol 3-phosphate to dihydroxyacetone. Uses fumarate or nitrate as electron acceptor. The sequence is that of Anaerobic glycerol-3-phosphate dehydrogenase subunit B from Histophilus somni (strain 129Pt) (Haemophilus somnus).